Consider the following 360-residue polypeptide: D-alanine--D-alanine ligase (360 aa).

One can recognise an ATP-grasp domain in the interval 149-353 (KKLMAAEGLP…YEELLDVLVQ (205 aa)). An ATP-binding site is contributed by 176–231 (KNLLGLPVFVKPARGGSSIGISRVTAWEDFNKAVGLARAHDEKVIVESEIVGSEVE). Residues Asp308, Glu320, and Asn322 each coordinate Mg(2+).

It belongs to the D-alanine--D-alanine ligase family. It depends on Mg(2+) as a cofactor. The cofactor is Mn(2+).

The protein resides in the cytoplasm. It carries out the reaction 2 D-alanine + ATP = D-alanyl-D-alanine + ADP + phosphate + H(+). The protein operates within cell wall biogenesis; peptidoglycan biosynthesis. In terms of biological role, cell wall formation. This chain is D-alanine--D-alanine ligase, found in Corynebacterium glutamicum (strain R).